The chain runs to 127 residues: MFPHLVGLGINEPTQIERYSLRQEAHKDVLKIYFKKQKGELFAKSVKFKYPRQIKNVLVDSGSHQYKEVTEINRNLTLVIDELNKITKPEVMGEVDVKQKILNDLRHLEKVVASKIAEIEADLQKLN.

This sequence belongs to the UPF0325 family.

The sequence is that of UPF0325 protein VC_2264 from Vibrio cholerae serotype O1 (strain ATCC 39315 / El Tor Inaba N16961).